The primary structure comprises 1186 residues: Syntaxin-binding protein 5-like (1186 aa).

The residue at position 1 (Met1) is an N-acetylmethionine. A disordered region spans residues 15-40; it reads ASSPGSGSSSGSNSGGGAGSGSVHPA. Low complexity predominate over residues 16–26; sequence SSPGSGSSSGS. WD repeat units lie at residues 74–107, 114–153, 158–194, 213–247, 253–285, 307–349, 357–391, 413–490, 518–629, and 643–705; these read TALA…CYCQ, VLQL…SLKF, ITYC…GYVI, HLSD…ELRV, IHSI…PSRP, PILK…KAIT, IVEF…VVDL, TCTA…YKLK, QMIY…ELVI, and TSLA…IADN. Phosphothreonine is present on Thr568. Phosphoserine occurs at positions 574, 589, and 593. Phosphothreonine is present on Thr596. Position 599 is a phosphoserine (Ser599). Omega-N-methylarginine is present on Arg709. The span at 748-769 shows a compositional bias: polar residues; that stretch reads TSDHVNGHCTSPTSQSCSSGKR. The tract at residues 748 to 771 is disordered; it reads TSDHVNGHCTSPTSQSCSSGKRLS. Phosphoserine is present on residues Ser763, Ser765, Ser766, Ser771, Ser772, Ser793, Ser800, Ser812, Ser820, Ser822, and Ser823. 4 WD repeats span residues 832–889, 898–969, 974–1018, and 1032–1055; these read ITAL…SGTF, TFSC…QTCL, ITET…LDVN, and CFTN…TYSQ. Thr1093 carries the post-translational modification Phosphothreonine. Positions 1121–1181 constitute a v-SNARE coiled-coil homology domain; it reads SIEGMKGAAG…HELMLKYKDK (61 aa).

Belongs to the WD repeat L(2)GL family. Interacts with STX1A and STX4. In terms of processing, phosphorylated, leading to STXBP5L increased turnover and subsequent de-repression of insulin secretion. Phosphorylated on serine residues in response to glucose or phorbol esters. Ubiquitinated by the E3 ligase SYVN1, leading to STXBP5L proteasomal degradation. In terms of tissue distribution, detected in kidney, hippocampus and lung carcinoma.

The protein localises to the cytoplasm. Its subcellular location is the cell membrane. It is found in the membrane. In terms of biological role, plays a role in vesicle trafficking and exocytosis inhibition. In pancreatic beta-cells, inhibits insulin secretion probably by interacting with and regulating STX1A and STX4, key t-SNARE proteins involved in the fusion of insulin granules to the plasma membrane. Also plays a role in neurotransmitter release by inhibiting basal acetylcholine release from axon terminals and by preventing synaptic fatigue upon repetitive stimulation. Promotes as well axonal outgrowth. This chain is Syntaxin-binding protein 5-like (STXBP5L), found in Homo sapiens (Human).